Consider the following 350-residue polypeptide: Sodium/calcium exchanger MaX1 (350 aa).

The next 10 membrane-spanning stretches (helical) occupy residues 4–24 (VNFL…DYFV), 39–59 (FVIG…ASSI), 69–89 (IVIG…VGVA), 101–121 (MLKR…VFAF), 125–145 (LSML…FFLF), 202–222 (GGFA…VIGA), 242–264 (VIGT…VSAA), 276–296 (VIGS…LFYP), 302–322 (MSLF…LIFI), and 330–350 (RWEG…LFYI).

It belongs to the Ca(2+):cation antiporter (CaCA) (TC 2.A.19) family.

The protein localises to the cell membrane. Its activity is regulated as follows. Calcium transport is inhibited by Na(+), K(+), Li(+), Mg(2+) or Mn(2+). Catalyzes Na(+)/Ca(2+) exchange. The transport is electrogenic with a likely stoichiometry of 3 or more Na(+) for each Ca(2+). Is K(+)-independent. The protein is Sodium/calcium exchanger MaX1 (maX1) of Methanosarcina acetivorans (strain ATCC 35395 / DSM 2834 / JCM 12185 / C2A).